We begin with the raw amino-acid sequence, 88 residues long: Small ribosomal subunit protein uS15c (88 aa).

It belongs to the universal ribosomal protein uS15 family. As to quaternary structure, part of the 30S ribosomal subunit.

It localises to the plastid. It is found in the chloroplast. This Pinus thunbergii (Japanese black pine) protein is Small ribosomal subunit protein uS15c (rps15).